The sequence spans 479 residues: ESX-1 secretion system ATPase EccB1 (479 aa).

The Cytoplasmic portion of the chain corresponds to 1–44; sequence MAGFRLTTKVQVSGWRFLLRRVEHAIVRRDTRMFDDPLQFYSRA. Residues 45–65 traverse the membrane as a helical segment; it reads VFAGVVVSVLICLGAALMAYF. At 66 to 479 the chain is on the periplasmic side; it reads KPLGKQGSDQ…NPRKVASGEG (414 aa). Cysteine 152 and cysteine 347 form a disulfide bridge.

Belongs to the EccB family. Part of the ESX-1 / type VII secretion system (T7SS), which is composed of cytosolic and membrane components. The ESX-1 membrane complex is composed of EccB1, EccCa1, EccCb1, EccD1 and EccE1.

It localises to the cell inner membrane. Functionally, an ATPase. Part of the ESX-1 / type VII specialized secretion system (T7SS), which exports several proteins including EsxA and EsxB. Plays a role in DNA conjugation, in both donor and recipient strains. In Mycolicibacterium smegmatis (strain MKD8) (Mycobacterium smegmatis), this protein is ESX-1 secretion system ATPase EccB1.